Reading from the N-terminus, the 67-residue chain is Large ribosomal subunit protein bL35 (67 aa).

It belongs to the bacterial ribosomal protein bL35 family.

The protein is Large ribosomal subunit protein bL35 of Dehalococcoides mccartyi (strain ATCC BAA-2100 / JCM 16839 / KCTC 5957 / BAV1).